The sequence spans 376 residues: N-acetyldiaminopimelate deacetylase (376 aa).

Asp69 is an active-site residue. Glu128 serves as the catalytic Proton acceptor.

Belongs to the peptidase M20A family. N-acetyldiaminopimelate deacetylase subfamily.

The catalysed reaction is N-acetyl-(2S,6S)-2,6-diaminopimelate + H2O = (2S,6S)-2,6-diaminopimelate + acetate. Its pathway is amino-acid biosynthesis; L-lysine biosynthesis via DAP pathway; LL-2,6-diaminopimelate from (S)-tetrahydrodipicolinate (acetylase route): step 3/3. Catalyzes the conversion of N-acetyl-diaminopimelate to diaminopimelate and acetate. The protein is N-acetyldiaminopimelate deacetylase of Streptococcus pneumoniae (strain JJA).